The following is a 250-amino-acid chain: NADH-quinone oxidoreductase subunit C (250 aa).

This sequence belongs to the complex I 30 kDa subunit family. In terms of assembly, NDH-1 is composed of 14 different subunits. Subunits NuoB, C, D, E, F, and G constitute the peripheral sector of the complex.

It is found in the cell inner membrane. The enzyme catalyses a quinone + NADH + 5 H(+)(in) = a quinol + NAD(+) + 4 H(+)(out). In terms of biological role, NDH-1 shuttles electrons from NADH, via FMN and iron-sulfur (Fe-S) centers, to quinones in the respiratory chain. The immediate electron acceptor for the enzyme in this species is believed to be ubiquinone. Couples the redox reaction to proton translocation (for every two electrons transferred, four hydrogen ions are translocated across the cytoplasmic membrane), and thus conserves the redox energy in a proton gradient. The sequence is that of NADH-quinone oxidoreductase subunit C from Xylella fastidiosa (strain M23).